A 404-amino-acid polypeptide reads, in one-letter code: Putative nitronate monooxygenase (404 aa).

Residue 41 to 43 (PMA) coordinates FMN. Histidine 224 (proton acceptor) is an active-site residue. Residue histidine 224 participates in substrate binding. Residues 270-272 (AGG) and 293-294 (GT) contribute to the FMN site.

It belongs to the nitronate monooxygenase family. NMO class I subfamily. It depends on FMN as a cofactor.

It is found in the cytoplasm. It carries out the reaction ethylnitronate + O2 = chemical entity + acetaldehyde + nitrite + H(+). Its function is as follows. Catalyzes the oxidation of alkyl nitronates to produce the corresponding carbonyl compounds and nitrites. In Saccharomyces cerevisiae (strain ATCC 204508 / S288c) (Baker's yeast), this protein is Putative nitronate monooxygenase.